A 710-amino-acid polypeptide reads, in one-letter code: uncharacterized protein (710 aa).

The tract at residues 1 to 40 (MSESDGAFKSPSLPPSHHAPAPMSPEKIRAPAEQMDGPVE) is disordered. Residues 15-25 (PSHHAPAPMSP) are compositionally biased toward low complexity. The region spanning 108 to 165 (VVIGRIKPGCDLLMEHPSISRYHCILQYGNDKMSKTGKGWHIFELGSTHGSRMNKKRL) is the FHA domain. Coiled-coil stretches lie at residues 206-240 (TEMKLRKHKKELEAKLRAAAAQEMIDDEKREKEEE), 409-440 (ETDTYESLCRKLEESKKEIIECQKHLDELSAG), and 471-502 (AKTKMEKSKWRQKLMAATHESQKLEKLVKIAK). The interval 230-250 (IDDEKREKEEEGCGWGMDYGE) is disordered. Disordered stretches follow at residues 535 to 560 (EIDQTPSQGPGPSTSATLPATVAPTS), 591 to 619 (KNSLPAVDEPSSVKDEVSEETPQKEAFGS), and 671 to 710 (EDYGAGVEDRDEKYSTWMPPNADQSEAKQDALRAKFAGRY). The span at 538–560 (QTPSQGPGPSTSATLPATVAPTS) shows a compositional bias: polar residues. The stretch at 613–661 (QKEAFGSKVQKRVAQWEEELEAEKEELAKKQKLEAEEEAKKKVQRVRRR) forms a coiled coil.

This is an uncharacterized protein from Caenorhabditis elegans.